A 241-amino-acid chain; its full sequence is MAANLEDVPSMELMTELLRRMKCSSKPDKRVILVGPPGCGKGTQSPLIKDEFCLCHLATGDMLRAAVAAKTPLGIKAKEAMDKGELVSDDLVVGIIDEAMKKTSCQKGFILDGFPRTVVQAQKLDEMLAKQGTKIDKVLNFAIDDAILEERITGRWIHPSSGRSYHTKFAPPKTPGLDDVTGEPLIQRKDDTAAVLKSRLEAFHVQTKPVIDYYTKKGIVANLHAEKPPKEVTVEVQKALS.

38–43 (GCGKGT) is a binding site for ATP. Positions 58-87 (ATGDMLRAAVAAKTPLGIKAKEAMDKGELV) are NMP. AMP is bound by residues Thr-59, Arg-64, 85–87 (ELV), 113–116 (GFPR), and Gln-120. Positions 154–191 (GRWIHPSSGRSYHTKFAPPKTPGLDDVTGEPLIQRKDD) are LID. Position 155 (Arg-155) interacts with ATP. Residues Arg-188 and Arg-199 each contribute to the AMP site.

This sequence belongs to the adenylate kinase family.

The protein localises to the cytoplasm. It carries out the reaction AMP + ATP = 2 ADP. Catalyzes the reversible transfer of the terminal phosphate group between ATP and AMP. Plays an important role in cellular energy homeostasis and in adenine nucleotide metabolism. The protein is Adenylate kinase 3 (ADK-A) of Oryza sativa subsp. japonica (Rice).